Consider the following 78-residue polypeptide: Dihydrofolate reductase type 2 (78 aa).

NADP(+) is bound by residues 32–36 (KKSGA) and 66–69 (VQIY). Substrate is bound at residue isoleucine 68.

In terms of assembly, homotetramer.

It catalyses the reaction (6S)-5,6,7,8-tetrahydrofolate + NADP(+) = 7,8-dihydrofolate + NADPH + H(+). It participates in cofactor biosynthesis; tetrahydrofolate biosynthesis; 5,6,7,8-tetrahydrofolate from 7,8-dihydrofolate: step 1/1. Key enzyme in folate metabolism. Catalyzes an essential reaction for de novo glycine and purine synthesis, and for DNA precursor synthesis. The protein is Dihydrofolate reductase type 2 of Escherichia coli.